The following is a 484-amino-acid chain: Probable glycine dehydrogenase (decarboxylating) subunit 2 (484 aa).

An N6-(pyridoxal phosphate)lysine modification is found at K264.

The protein belongs to the GcvP family. C-terminal subunit subfamily. As to quaternary structure, the glycine cleavage system is composed of four proteins: P, T, L and H. In this organism, the P 'protein' is a heterodimer of two subunits. Pyridoxal 5'-phosphate serves as cofactor.

The catalysed reaction is N(6)-[(R)-lipoyl]-L-lysyl-[glycine-cleavage complex H protein] + glycine + H(+) = N(6)-[(R)-S(8)-aminomethyldihydrolipoyl]-L-lysyl-[glycine-cleavage complex H protein] + CO2. The glycine cleavage system catalyzes the degradation of glycine. The P protein binds the alpha-amino group of glycine through its pyridoxal phosphate cofactor; CO(2) is released and the remaining methylamine moiety is then transferred to the lipoamide cofactor of the H protein. This is Probable glycine dehydrogenase (decarboxylating) subunit 2 from Legionella pneumophila (strain Paris).